Here is a 104-residue protein sequence, read N- to C-terminus: Ycf49-like protein (104 aa).

Transmembrane regions (helical) follow at residues 6–26 (IPTW…IALV), 41–61 (LAWG…WHFF), and 73–93 (LQAL…WWIY).

Belongs to the ycf49 family.

The protein resides in the cell membrane. This chain is Ycf49-like protein, found in Synechocystis sp. (strain ATCC 27184 / PCC 6803 / Kazusa).